Reading from the N-terminus, the 309-residue chain is Porphobilinogen deaminase (309 aa).

Cysteine 241 carries the post-translational modification S-(dipyrrolylmethanemethyl)cysteine.

This sequence belongs to the HMBS family. As to quaternary structure, monomer. Requires dipyrromethane as cofactor.

The enzyme catalyses 4 porphobilinogen + H2O = hydroxymethylbilane + 4 NH4(+). The protein operates within porphyrin-containing compound metabolism; protoporphyrin-IX biosynthesis; coproporphyrinogen-III from 5-aminolevulinate: step 2/4. In terms of biological role, tetrapolymerization of the monopyrrole PBG into the hydroxymethylbilane pre-uroporphyrinogen in several discrete steps. This is Porphobilinogen deaminase from Desulforudis audaxviator (strain MP104C).